Consider the following 264-residue polypeptide: Phosphonoacetaldehyde hydrolase (264 aa).

Residue aspartate 9 is the Nucleophile of the active site. Aspartate 9 and alanine 11 together coordinate Mg(2+). The active-site Schiff-base intermediate with substrate is the lysine 50. Residue aspartate 183 participates in Mg(2+) binding.

It belongs to the HAD-like hydrolase superfamily. PhnX family. In terms of assembly, homodimer. Requires Mg(2+) as cofactor.

It catalyses the reaction phosphonoacetaldehyde + H2O = acetaldehyde + phosphate + H(+). Its function is as follows. Involved in phosphonate degradation. The sequence is that of Phosphonoacetaldehyde hydrolase (phnX) from Bacillus cereus.